A 127-amino-acid chain; its full sequence is Anti-adapter protein IraD (127 aa).

It belongs to the GpW/Gp25 family. IraD subfamily. As to quaternary structure, interacts with RssB.

It is found in the cytoplasm. Its function is as follows. Inhibits RpoS proteolysis by regulating RssB activity, thereby increasing the stability of the sigma stress factor RpoS during oxidative stress. Its effect on RpoS stability is due to its interaction with RssB, which probably blocks the interaction of RssB with RpoS, and the consequent delivery of the RssB-RpoS complex to the ClpXP protein degradation pathway. The protein is Anti-adapter protein IraD of Escherichia coli (strain SMS-3-5 / SECEC).